The primary structure comprises 640 residues: Protein ALTERED PHOSPHATE STARVATION RESPONSE 1 (640 aa).

The disordered stretch occupies residues 60 to 175 (TPLHLHHNPP…ATPQASSVVS (116 aa)). Pro residues predominate over residues 68–87 (PPSPSPPPPPPPRPPPPPLS). Positions 88–103 (PGSETTTWTTTTTSSV) are enriched in low complexity. A compositionally biased stretch (pro residues) spans 104–118 (LPPPPPPPPPPPPPS). Residues 144–173 (TTATRTATGTGSDAAVTTAPTTATPQASSV) are compositionally biased toward low complexity. A coiled-coil region spans residues 336-371 (KTEKAKKDVEKLESQLSVSSQAIQSASNEIIKLRET).

In terms of tissue distribution, expressed in the root tip of primary and lateral roots, specifically in the meristematic region, including the quiescent center and lateral root cap cells.

The protein localises to the nucleus. Required for the coordination of cell differentiation and cell elongation in the root tip. Required for the coordination of cell processes necessary for correct root growth in response to phosphate starvation, through the modulation of the auxin transporter protein PIN7. The protein is Protein ALTERED PHOSPHATE STARVATION RESPONSE 1 of Arabidopsis thaliana (Mouse-ear cress).